A 723-amino-acid polypeptide reads, in one-letter code: Lim and transglutaminase domain protein ltd-1 (723 aa).

The LIM zinc-binding domain maps to Q5–H72.

This sequence belongs to the transglutaminase-like superfamily. Expressed in the Y and U rectal epithelial cells, in marginal cells of the terminal bulb and isthmus of the pharynx (at protein level).

It localises to the cytoplasm. The protein localises to the cytoskeleton. Its function is as follows. Cytoskeleton-associated protein. May play a role in hypodermal cell development. The sequence is that of Lim and transglutaminase domain protein ltd-1 from Caenorhabditis elegans.